The chain runs to 495 residues: MSRAMALSQLLPDVALARDVQVSGLVMDSRAVRPGDAFVAIAGFGAHGLGFAAQALASGASAILFEPPAPADLPVPADAIAVPGLRARLGVLADHFHGAPSQAMRMIGVTGTNGKTSTVQLLAQALTLLGTPTGTIGTLGVGLYGAAVPTGFTTPLVLQTHAELAQLRDAGAQAVAMEVSSHALDQGRVDAVQFDVAVFTNLTRDHLDYHGDMAQYGAAKAKLFARAGLRAAVVNLDDAFGRTLFAALDPALHAIGVSSRAQAGATVQAQDLQLDHHGIQFTLHIGEAAHPVRSPLLGRFNVDNLLAVAGALHALDIAPAQIAEVLGRLQPIHGRMNRLGGAHGAPLVVVDYAHTPDALEQALTSLRSHAQDRLICVFGCGGERDTGKRPQMAAIAEVTADVAIVTDDNPRGEDGDVIVADILRGFARPDAAIVQRDRAAAIHQAISMAGADDIVLIAGKGHEPYQEVAGVRHAFDDAAVAAQALLPRTGLGVRV.

Serine 29 provides a ligand contact to UDP-N-acetyl-alpha-D-muramoyl-L-alanyl-D-glutamate. An ATP-binding site is contributed by 111–117; that stretch reads GTNGKTS. Residues 153–154, serine 180, glutamine 186, and arginine 188 contribute to the UDP-N-acetyl-alpha-D-muramoyl-L-alanyl-D-glutamate site; that span reads TT. N6-carboxylysine is present on lysine 220. Meso-2,6-diaminopimelate contacts are provided by residues arginine 384, 408–411, glycine 459, and glutamate 463; that span reads DNPR. A Meso-diaminopimelate recognition motif motif is present at residues 408–411; sequence DNPR.

Belongs to the MurCDEF family. MurE subfamily. Requires Mg(2+) as cofactor. In terms of processing, carboxylation is probably crucial for Mg(2+) binding and, consequently, for the gamma-phosphate positioning of ATP.

The protein resides in the cytoplasm. The enzyme catalyses UDP-N-acetyl-alpha-D-muramoyl-L-alanyl-D-glutamate + meso-2,6-diaminopimelate + ATP = UDP-N-acetyl-alpha-D-muramoyl-L-alanyl-gamma-D-glutamyl-meso-2,6-diaminopimelate + ADP + phosphate + H(+). It functions in the pathway cell wall biogenesis; peptidoglycan biosynthesis. Its function is as follows. Catalyzes the addition of meso-diaminopimelic acid to the nucleotide precursor UDP-N-acetylmuramoyl-L-alanyl-D-glutamate (UMAG) in the biosynthesis of bacterial cell-wall peptidoglycan. This Xanthomonas campestris pv. campestris (strain 8004) protein is UDP-N-acetylmuramoyl-L-alanyl-D-glutamate--2,6-diaminopimelate ligase.